We begin with the raw amino-acid sequence, 77 residues long: Conotoxin ArMKLT2-0322 (77 aa).

The signal sequence occupies residues 1–22; the sequence is MKLTCVLIIAVLFLIVCQLNTA. Residues 23 to 47 constitute a propeptide that is removed on maturation; sequence DDSRDKQEYRAVRLRDAIRNSRGSR. 3 cysteine pairs are disulfide-bonded: C49/C62, C56/C67, and C61/C74.

This sequence belongs to the conotoxin O1 superfamily. Expressed by the venom duct.

Its subcellular location is the secreted. This is Conotoxin ArMKLT2-0322 from Conus arenatus (Sand-dusted cone).